Reading from the N-terminus, the 460-residue chain is Ribulose bisphosphate carboxylase (460 aa).

Asn112 lines the substrate pocket. Lys167 acts as the Proton acceptor in catalysis. Residue Lys169 participates in substrate binding. Residues Lys192, Asp194, and Glu195 each coordinate Mg(2+). Lys192 is subject to N6-carboxylysine. The active-site Proton acceptor is the His288. Substrate-binding residues include Arg289, His322, and Ser369.

The protein belongs to the RuBisCO large chain family. Type II subfamily. Homodimer. Mg(2+) serves as cofactor.

It carries out the reaction 2 (2R)-3-phosphoglycerate + 2 H(+) = D-ribulose 1,5-bisphosphate + CO2 + H2O. The catalysed reaction is D-ribulose 1,5-bisphosphate + O2 = 2-phosphoglycolate + (2R)-3-phosphoglycerate + 2 H(+). Functionally, ruBisCO catalyzes two reactions: the carboxylation of D-ribulose 1,5-bisphosphate, the primary event in carbon dioxide fixation, as well as the oxidative fragmentation of the pentose substrate. Both reactions occur simultaneously and in competition at the same active site. The chain is Ribulose bisphosphate carboxylase from Rhodopseudomonas palustris (strain BisA53).